A 385-amino-acid chain; its full sequence is Succinate--CoA ligase [ADP-forming] subunit beta (385 aa).

The ATP-grasp domain occupies 9–244 (KEVLRKYGVS…LDEEDPKEIE (236 aa)). Residues K46, 53–55 (GRG), E99, C102, and E107 contribute to the ATP site. Mg(2+) contacts are provided by N199 and D213. S220 carries the post-translational modification Phosphoserine. Residues N264 and 321-323 (GIM) each bind substrate.

Belongs to the succinate/malate CoA ligase beta subunit family. As to quaternary structure, heterotetramer of two alpha and two beta subunits. Interacts with BrxC. It depends on Mg(2+) as a cofactor.

The enzyme catalyses succinate + ATP + CoA = succinyl-CoA + ADP + phosphate. It carries out the reaction GTP + succinate + CoA = succinyl-CoA + GDP + phosphate. The protein operates within carbohydrate metabolism; tricarboxylic acid cycle; succinate from succinyl-CoA (ligase route): step 1/1. Its function is as follows. Succinyl-CoA synthetase functions in the citric acid cycle (TCA), coupling the hydrolysis of succinyl-CoA to the synthesis of either ATP or GTP and thus represents the only step of substrate-level phosphorylation in the TCA. The beta subunit provides nucleotide specificity of the enzyme and binds the substrate succinate, while the binding sites for coenzyme A and phosphate are found in the alpha subunit. The protein is Succinate--CoA ligase [ADP-forming] subunit beta of Bacillus subtilis (strain 168).